The following is a 167-amino-acid chain: Large ribosomal subunit protein uL10 (167 aa).

It belongs to the universal ribosomal protein uL10 family. As to quaternary structure, part of the ribosomal stalk of the 50S ribosomal subunit. The N-terminus interacts with L11 and the large rRNA to form the base of the stalk. The C-terminus forms an elongated spine to which L12 dimers bind in a sequential fashion forming a multimeric L10(L12)X complex.

Its function is as follows. Forms part of the ribosomal stalk, playing a central role in the interaction of the ribosome with GTP-bound translation factors. The chain is Large ribosomal subunit protein uL10 from Streptococcus thermophilus (strain CNRZ 1066).